The sequence spans 223 residues: Interleukin-12 subunit alpha (223 aa).

The first 23 residues, 1-23, serve as a signal peptide directing secretion; sequence MCPSARSLLLLASLVLLEHLGSA. Residues asparagine 41, asparagine 79, asparagine 121, and asparagine 176 are each glycosylated (N-linked (GlcNAc...) asparagine). Disulfide bonds link cysteine 66/cysteine 200 and cysteine 87/cysteine 125.

The protein belongs to the IL-6 superfamily. Heterodimer with IL12B; disulfide-linked. This heterodimer is known as interleukin IL-12. Heterodimer with EBI3/IL27B; not disulfide-linked. This heterodimer is known as interleukin IL-35. Interacts with NBR1; this interaction promotes IL-12 secretion.

The protein resides in the secreted. Heterodimerizes with IL12B to form the IL-12 cytokine or with EBI3/IL27B to form the IL-35 cytokine. IL-12 is primarily produced by professional antigen-presenting cells (APCs) such as B-cells and dendritic cells (DCs) as well as macrophages and granulocytes and regulates T-cell and natural killer-cell responses, induces the production of interferon-gamma (IFN-gamma), favors the differentiation of T-helper 1 (Th1) cells and is an important link between innate resistance and adaptive immunity. Mechanistically, exerts its biological effects through a receptor composed of IL12R1 and IL12R2 subunits. Binding to the receptor results in the rapid tyrosine phosphorylation of a number of cellular substrates including the JAK family kinases TYK2 and JAK2. In turn, recruited STAT4 gets phosphorylated and translocates to the nucleus where it regulates cytokine/growth factor responsive genes. As part of IL-35, plays essential roles in maintaining the immune homeostasis of the liver microenvironment and also functions as an immune-suppressive cytokine. Mediates biological events through unconventional receptors composed of IL12RB2 and gp130/IL6ST heterodimers or homodimers. Signaling requires the transcription factors STAT1 and STAT4, which form a unique heterodimer that binds to distinct DNA sites. The chain is Interleukin-12 subunit alpha (IL12A) from Marmota monax (Woodchuck).